The following is a 472-amino-acid chain: Adenosylhomocysteinase (472 aa).

Substrate is bound by residues T63, D138, and E198. T199–T201 serves as a coordination point for NAD(+). Residues K228 and D232 each contribute to the substrate site. NAD(+) is bound by residues N233, G262–G267, E285, N320, I341–H343, and N386.

Belongs to the adenosylhomocysteinase family. It depends on NAD(+) as a cofactor.

The protein resides in the cytoplasm. The enzyme catalyses S-adenosyl-L-homocysteine + H2O = L-homocysteine + adenosine. Its pathway is amino-acid biosynthesis; L-homocysteine biosynthesis; L-homocysteine from S-adenosyl-L-homocysteine: step 1/1. Its function is as follows. May play a key role in the regulation of the intracellular concentration of adenosylhomocysteine. This is Adenosylhomocysteinase from Methylococcus capsulatus (strain ATCC 33009 / NCIMB 11132 / Bath).